Reading from the N-terminus, the 459-residue chain is uncharacterized protein (459 aa).

One can recognise a TRAM domain in the interval 5-63 (PVEEGQKFPLTIRRMGINGEGIGYFKKAVVFVPGAITGEEVVVEAVKVRDRFTEAKLNK). Cys76, Cys82, Cys85, and Cys166 together coordinate [4Fe-4S] cluster. Gln290, Tyr319, Asp340, and Asp388 together coordinate S-adenosyl-L-methionine. Catalysis depends on Cys415, which acts as the Nucleophile.

This sequence belongs to the class I-like SAM-binding methyltransferase superfamily. RNA M5U methyltransferase family.

This is an uncharacterized protein from Listeria monocytogenes serotype 4b (strain F2365).